The following is a 210-amino-acid chain: Transposable element activator uncharacterized 23 kDa protein (210 aa).

A compositionally biased stretch (basic and acidic residues) spans 67–78 (SGRMGGPRRDGR). Positions 67–87 (SGRMGGPRRDGRVASSGVEGG) are disordered.

This Zea mays (Maize) protein is Transposable element activator uncharacterized 23 kDa protein.